Consider the following 126-residue polypeptide: Large ribosomal subunit protein uL22 (126 aa).

This sequence belongs to the universal ribosomal protein uL22 family. As to quaternary structure, part of the 50S ribosomal subunit.

In terms of biological role, this protein binds specifically to 23S rRNA; its binding is stimulated by other ribosomal proteins, e.g. L4, L17, and L20. It is important during the early stages of 50S assembly. It makes multiple contacts with different domains of the 23S rRNA in the assembled 50S subunit and ribosome. Its function is as follows. The globular domain of the protein is located near the polypeptide exit tunnel on the outside of the subunit, while an extended beta-hairpin is found that lines the wall of the exit tunnel in the center of the 70S ribosome. This chain is Large ribosomal subunit protein uL22, found in Sphingopyxis alaskensis (strain DSM 13593 / LMG 18877 / RB2256) (Sphingomonas alaskensis).